Reading from the N-terminus, the 613-residue chain is Zinc finger protein 665 (613 aa).

18 C2H2-type zinc fingers span residues Tyr113 to His135, Tyr141 to His163, Tyr169 to His191, Tyr197 to His219, Tyr225 to His247, Tyr253 to His275, Tyr281 to His303, Tyr309 to His331, Phe337 to His359, Tyr365 to His387, Tyr393 to His415, Tyr421 to His443, Tyr449 to His471, Tyr477 to His499, Tyr505 to His527, Tyr533 to His555, Tyr561 to His583, and Tyr589 to His611.

It belongs to the krueppel C2H2-type zinc-finger protein family.

Its subcellular location is the nucleus. Functionally, may be involved in transcriptional regulation. This Pongo abelii (Sumatran orangutan) protein is Zinc finger protein 665 (ZNF665).